Reading from the N-terminus, the 387-residue chain is Erythronate-4-phosphate dehydrogenase (387 aa).

S45 and T67 together coordinate substrate. D147 is an NAD(+) binding site. R208 is an active-site residue. NAD(+) is bound at residue D232. The active site involves E237. Catalysis depends on H254, which acts as the Proton donor. G257 lines the NAD(+) pocket. Residue Y258 coordinates substrate.

This sequence belongs to the D-isomer specific 2-hydroxyacid dehydrogenase family. PdxB subfamily. Homodimer.

It is found in the cytoplasm. It catalyses the reaction 4-phospho-D-erythronate + NAD(+) = (R)-3-hydroxy-2-oxo-4-phosphooxybutanoate + NADH + H(+). The protein operates within cofactor biosynthesis; pyridoxine 5'-phosphate biosynthesis; pyridoxine 5'-phosphate from D-erythrose 4-phosphate: step 2/5. Functionally, catalyzes the oxidation of erythronate-4-phosphate to 3-hydroxy-2-oxo-4-phosphonooxybutanoate. This is Erythronate-4-phosphate dehydrogenase from Shewanella woodyi (strain ATCC 51908 / MS32).